Reading from the N-terminus, the 283-residue chain is MEMO1 family protein DKAM_1357 (283 aa).

The protein belongs to the MEMO1 family.

In Desulfurococcus amylolyticus (strain DSM 18924 / JCM 16383 / VKM B-2413 / 1221n) (Desulfurococcus kamchatkensis), this protein is MEMO1 family protein DKAM_1357.